Consider the following 336-residue polypeptide: MIPPLNRYVPALSKNELVKTVTNRDIQFTSFNGKDYPLCFLDEKTPLLFQWFERNPARFGKNDIPIINTEKNPYLNNIIKAATIEKERLIGIFVDGDFFPGQKDAFSKLEYDYENIKVIYRNDIDFSMYDKKLSEIYMENISKQESMPEEKRDCHLLQLLKKELSDIQEGNDSLIKSYLLDKGHGWFDFYRNMAMLKAGQLFLEADKVGCYDLSTNSGCIYLDADMIITEKLGGIYIPDGIAVHVERIDGRASMENGIIAVDRNNHPALLAGLEIMHTKFDADPYSDGVCNGIRKHFNYSLNEDYNSFCDFIEFKHDNIIMNTSQFTQSSWARHVQ.

Arg-24 carries N-beta-linked (GlcNAc) arginine; by autocatalysis glycosylation. Residues 50 to 52 and Tyr-74 contribute to the UDP-N-acetyl-alpha-D-glucosamine site; that span reads QWF. Arg-152 is a glycosylation site (N-beta-linked (GlcNAc) arginine; by autocatalysis). A DXD motif motif is present at residues 223–225; it reads DAD. UDP-N-acetyl-alpha-D-glucosamine is bound at residue 224–225; the sequence is AD. Residue Asp-225 coordinates Mn(2+). Residue Glu-255 is the Proton acceptor of the active site. Mn(2+) contacts are provided by Asn-322 and Ser-324. The UDP-N-acetyl-alpha-D-glucosamine site is built by Ser-324 and Ser-329. The N-beta-linked (GlcNAc) arginine; by autocatalysis glycan is linked to Arg-333.

The protein belongs to the glycosyltransferase NleB family. Mn(2+) is required as a cofactor. Auto-glycosylated: arginine GlcNAcylation is required for activity toward death domain-containing host target proteins.

It is found in the secreted. It localises to the host cytoplasm. The protein localises to the host cytosol. The enzyme catalyses L-arginyl-[protein] + UDP-N-acetyl-alpha-D-glucosamine = N(omega)-(N-acetyl-beta-D-glucosaminyl)-L-arginyl-[protein] + UDP + H(+). Its activity is regulated as follows. Protein-arginine N-acetylglucosaminyltransferase activity is inhibited by 100066N compound (flavone analog) and 102644N compound (a substituted isoxazole). In terms of biological role, protein-arginine N-acetylglucosaminyltransferase effector that disrupts TNF signaling in infected cells, including NF-kappa-B signaling, apoptosis and necroptosis. Acts by catalyzing the transfer of a single N-acetylglucosamine (GlcNAc) to a conserved arginine residue in the death domain of host proteins TRADD and, to a lower extent, FADD: arginine GlcNAcylation prevents homotypic/heterotypic death domain interactions and assembly of the oligomeric TNF-alpha receptor complex, thereby disrupting TNF signaling. Also acts on host proteins without a death domain: catalyzes arginine GlcNAcylation of host GAPDH protein, thereby preventing GAPDH interaction with TRAF2, leading to inhibit NF-kappa-B signaling. Catalyzes GlcNAcylation of host tubulin-folding cofactor TBCB, thereby promoting microtubule stability. Also mediates auto-GlcNAcylation, which is required for activity toward death domain-containing host target proteins. This chain is Protein-arginine N-acetylglucosaminyltransferase SseK1, found in Salmonella enteritidis (strain 2009K0958).